Consider the following 294-residue polypeptide: 2-hydroxy-3-oxopropionate reductase (294 aa).

Residues 4-18 (GFIG…MSKN) and serine 95 each bind NAD(+). Lysine 170 is a catalytic residue. Lysine 238 contributes to the NAD(+) binding site.

The protein belongs to the HIBADH-related family. 2-hydroxy-3-oxopropionate reductase subfamily.

It catalyses the reaction (R)-glycerate + NADP(+) = 2-hydroxy-3-oxopropanoate + NADPH + H(+). It carries out the reaction (R)-glycerate + NAD(+) = 2-hydroxy-3-oxopropanoate + NADH + H(+). Its pathway is carbohydrate acid metabolism; galactarate degradation; D-glycerate from galactarate: step 3/3. Catalyzes the reduction of tatronate semialdehyde to D-glycerate. The chain is 2-hydroxy-3-oxopropionate reductase from Escherichia coli O6:H1 (strain CFT073 / ATCC 700928 / UPEC).